A 214-amino-acid polypeptide reads, in one-letter code: dITP/XTP pyrophosphatase (214 aa).

13 to 18 (SHNKGK) contacts substrate. 2 residues coordinate Mg(2+): glutamate 45 and aspartate 74. Aspartate 74 acts as the Proton acceptor in catalysis. Substrate contacts are provided by residues serine 75, 163 to 166 (FGYD), lysine 186, and 199 to 200 (HR).

Belongs to the HAM1 NTPase family. As to quaternary structure, homodimer. The cofactor is Mg(2+).

The enzyme catalyses XTP + H2O = XMP + diphosphate + H(+). It carries out the reaction dITP + H2O = dIMP + diphosphate + H(+). It catalyses the reaction ITP + H2O = IMP + diphosphate + H(+). Pyrophosphatase that catalyzes the hydrolysis of nucleoside triphosphates to their monophosphate derivatives, with a high preference for the non-canonical purine nucleotides XTP (xanthosine triphosphate), dITP (deoxyinosine triphosphate) and ITP. Seems to function as a house-cleaning enzyme that removes non-canonical purine nucleotides from the nucleotide pool, thus preventing their incorporation into DNA/RNA and avoiding chromosomal lesions. The sequence is that of dITP/XTP pyrophosphatase from Agrobacterium fabrum (strain C58 / ATCC 33970) (Agrobacterium tumefaciens (strain C58)).